We begin with the raw amino-acid sequence, 250 residues long: Histone H1.1 (250 aa).

A compositionally biased stretch (polar residues) spans Met-1–Ser-11. 2 disordered regions span residues Met-1–Val-52 and Gln-104–Lys-250. Residues Ser-44 to Ala-118 enclose the H15 domain. A compositionally biased stretch (basic and acidic residues) spans Lys-122–Lys-133. Residues Ala-140–Ala-161 are compositionally biased toward low complexity. The span at Lys-174 to Lys-191 shows a compositional bias: basic and acidic residues. Low complexity predominate over residues Thr-192 to Lys-234. Basic residues predominate over residues Thr-235–Lys-250.

Belongs to the histone H1/H5 family.

The protein localises to the nucleus. Its subcellular location is the chromosome. Histones H1 are necessary for the condensation of nucleosome chains into higher-order structures. The chain is Histone H1.1 (His1.1) from Drosophila virilis (Fruit fly).